A 365-amino-acid polypeptide reads, in one-letter code: Peptide chain release factor 2 (365 aa).

Position 251 is an N5-methylglutamine (Gln251).

It belongs to the prokaryotic/mitochondrial release factor family. Methylated by PrmC. Methylation increases the termination efficiency of RF2.

It is found in the cytoplasm. Peptide chain release factor 2 directs the termination of translation in response to the peptide chain termination codons UGA and UAA. The sequence is that of Peptide chain release factor 2 from Neorickettsia sennetsu (strain ATCC VR-367 / Miyayama) (Ehrlichia sennetsu).